The primary structure comprises 545 residues: uncharacterized protein (545 aa).

Residues M1–R10 show a composition bias toward basic residues. The tract at residues M1–P25 is disordered. WD repeat units follow at residues A417–M456 and G460–S501.

This is an uncharacterized protein from Caenorhabditis elegans.